Consider the following 71-residue polypeptide: Brevinin-1SN1 (71 aa).

The signal sequence occupies residues 1–22 (MFTMKKPLLLLFFLGTINLSLC). The propeptide at 23–45 (EEERNADEEEKRDGDDEMDAEVE) is removed in mature form. Cysteines 65 and 71 form a disulfide.

The protein belongs to the frog skin active peptide (FSAP) family. Brevinin subfamily. As to expression, expressed by the skin glands.

It is found in the secreted. Its function is as follows. Antimicrobial peptide. Active against some Gram-negative and a variety of Gram-positive bacterial strains. Active against fungus C.glabrata 090902 but not against C.albicans ATCC 10231. Shows hemolytic activity against human erythrocytes. The protein is Brevinin-1SN1 of Sylvirana spinulosa (Fine-spined frog).